Consider the following 332-residue polypeptide: Procathepsin L (332 aa).

The signal sequence occupies residues 1–17 (MHPLLFLAGLCLGVASA). The propeptide at 18 to 112 (APQLYQSLDA…KVFQAPFFVE (95 aa)) is activation peptide. Glu-121 is a binding site for Zn(2+). Cys-137 is an active-site residue. Zn(2+) contacts are provided by Glu-162, Asp-183, Glu-198, and Asp-208. A disulfide bond links Cys-168 and Cys-210. Asn-220 carries N-linked (GlcNAc...) asparagine glycosylation. Asp-226, Asp-249, Asp-272, and Asp-274 together coordinate Zn(2+). A disulfide bond links Cys-268 and Cys-321. Residue His-275 is part of the active site. Residues 288–290 (ETE) constitute a propeptide that is removed on maturation. The active site involves Asn-299.

The protein belongs to the peptidase C1 family. As to quaternary structure, dimer of a heavy and a light chain linked by disulfide bonds. Interacts with Long isoform of CD74/Ii chain; the interaction stabilizes the conformation of mature CTSL. In terms of processing, during export along the endocytic pathway, pro-CTSL undergoes several proteolytic cleavages to generate the CTSL single-chain and two-chain mature forms, composed of a heavy chain linked to a light chain by disulfide bonds. Autocleavage; produces the single-chain CTSL after cleavage of the propeptide. The cleavage can be intermolecular. As to expression, expressed in the endometrium.

The protein localises to the lysosome. The protein resides in the apical cell membrane. It is found in the cytoplasmic vesicle. Its subcellular location is the secretory vesicle. It localises to the chromaffin granule. The protein localises to the secreted. The protein resides in the extracellular space. It catalyses the reaction Specificity close to that of papain. As compared to cathepsin B, cathepsin L exhibits higher activity toward protein substrates, but has little activity on Z-Arg-Arg-NHMec, and no peptidyl-dipeptidase activity.. Inhibited by the propeptide produced by autocleavage. Long isoform of CD74/Ii chain stabilizes the conformation of mature CTSL by binding to its active site and serving as a chaperone to help maintain a pool of mature enzyme in endocytic compartments and extracellular space of APCs. IFNG enhances the conversion into the CTSL mature and active form. Inhibited by CST6. Inhibited by the glycopeptide antibiotic teicoplanin. Inhibited by amantadine. Its function is as follows. Thiol protease important for the overall degradation of proteins in lysosomes. Plays a critical for normal cellular functions such as general protein turnover, antigen processing and bone remodeling. Involved in the solubilization of cross-linked TG/thyroglobulin and in the subsequent release of thyroid hormone thyroxine (T4) by limited proteolysis of TG/thyroglobulin in the thyroid follicle lumen. In neuroendocrine chromaffin cells secretory vesicles, catalyzes the prohormone proenkephalin processing to the active enkephalin peptide neurotransmitter. In thymus, regulates CD4(+) T cell positive selection by generating the major histocompatibility complex class II (MHCII) bound peptide ligands presented by cortical thymic epithelial cells. Also mediates invariant chain processing in cortical thymic epithelial cells. Major elastin-degrading enzyme at neutral pH. Accumulates as a mature and active enzyme in the extracellular space of antigen presenting cells (APCs) to regulate degradation of the extracellular matrix in the course of inflammation. Secreted form generates endostatin from COL18A1. Critical for cardiac morphology and function. Plays an important role in hair follicle morphogenesis and cycling, as well as epidermal differentiation. Required for maximal stimulation of steroidogenesis by TIMP1. The polypeptide is Procathepsin L (CTSL) (Felis catus (Cat)).